We begin with the raw amino-acid sequence, 224 residues long: Giant hemoglobin linker AV-1 chain (224 aa).

Residues histidine 62–valine 103 enclose the LDL-receptor class A domain. 3 disulfide bridges follow: cysteine 64/cysteine 77, cysteine 71/cysteine 90, and cysteine 84/cysteine 101. An N-linked (GlcNAc...) asparagine glycan is attached at asparagine 108.

Giant hemoglobin is composed of four heme-containing chains (AI to AIV), and two linker chains (AV and AVI).

In terms of biological role, acts as a linker for the assembly of heme-containing chains in the construction of giant hemoglobin. In Lamellibrachia sp. (Deep-sea giant tube worm), this protein is Giant hemoglobin linker AV-1 chain.